A 349-amino-acid polypeptide reads, in one-letter code: 5-deoxyribose 1-phosphate isomerase (349 aa).

Substrate is bound by residues 49 to 51 (RGA), Arg92, and Gln199. Asp240 (proton donor) is an active-site residue. 250 to 251 (NK) contacts substrate.

It belongs to the EIF-2B alpha/beta/delta subunits family. DrdI subfamily.

It catalyses the reaction 5-deoxy-alpha-D-ribose 1-phosphate = 5-deoxy-D-ribulose 1-phosphate. The protein operates within carbohydrate degradation. Its function is as follows. Catalyzes the isomerization of 5-deoxy-alpha-D-ribose 1-phosphate to 5-deoxy-D-ribulose 1-phosphate, as part of a 5-deoxyribose salvage pathway that recycles this toxic radical SAM enzyme by-product to mainstream metabolites. The sequence is that of 5-deoxyribose 1-phosphate isomerase from Clostridium botulinum (strain Kyoto / Type A2).